Consider the following 381-residue polypeptide: Bifunctional enzyme Fae/Hps (381 aa).

The formaldehyde-activating enzyme stretch occupies residues 1-150 (MIKFGEAVLG…KEKYRALHPL (150 aa)). The tract at residues 151–381 (VGFRDVRLEY…DEDEDIGEEL (231 aa)) is 3-hexulose-6-phosphate synthase.

In the N-terminal section; belongs to the formaldehyde-activating enzyme family. The protein in the C-terminal section; belongs to the HPS/KGPDC family. HPS subfamily.

The catalysed reaction is 5,6,7,8-tetrahydromethanopterin + formaldehyde = 5,10-methylenetetrahydromethanopterin + H2O. The enzyme catalyses D-ribulose 5-phosphate + formaldehyde = D-arabino-hex-3-ulose 6-phosphate. The protein operates within carbohydrate biosynthesis; D-ribose 5-phosphate biosynthesis. Functionally, catalyzes the condensation of formaldehyde with tetrahydromethanopterin (H(4)MPT) to 5,10-methylenetetrahydromethanopterin. Its function is as follows. Catalyzes the reversible formation of ribulose-5-phosphate and formaldehyde from 3-hexulose-6-phosphate. This is Bifunctional enzyme Fae/Hps from Methanocaldococcus jannaschii (strain ATCC 43067 / DSM 2661 / JAL-1 / JCM 10045 / NBRC 100440) (Methanococcus jannaschii).